The chain runs to 484 residues: Protein nucleotidyltransferase YdiU (484 aa).

Positions 81, 83, 84, 103, 115, 116, 166, and 173 each coordinate ATP. Asp-244 functions as the Proton acceptor in the catalytic mechanism. Asn-245 and Asp-254 together coordinate Mg(2+). Residue Asp-254 coordinates ATP.

It belongs to the SELO family. It depends on Mg(2+) as a cofactor. The cofactor is Mn(2+).

It carries out the reaction L-seryl-[protein] + ATP = 3-O-(5'-adenylyl)-L-seryl-[protein] + diphosphate. The catalysed reaction is L-threonyl-[protein] + ATP = 3-O-(5'-adenylyl)-L-threonyl-[protein] + diphosphate. It catalyses the reaction L-tyrosyl-[protein] + ATP = O-(5'-adenylyl)-L-tyrosyl-[protein] + diphosphate. The enzyme catalyses L-histidyl-[protein] + UTP = N(tele)-(5'-uridylyl)-L-histidyl-[protein] + diphosphate. It carries out the reaction L-seryl-[protein] + UTP = O-(5'-uridylyl)-L-seryl-[protein] + diphosphate. The catalysed reaction is L-tyrosyl-[protein] + UTP = O-(5'-uridylyl)-L-tyrosyl-[protein] + diphosphate. Its function is as follows. Nucleotidyltransferase involved in the post-translational modification of proteins. It can catalyze the addition of adenosine monophosphate (AMP) or uridine monophosphate (UMP) to a protein, resulting in modifications known as AMPylation and UMPylation. The sequence is that of Protein nucleotidyltransferase YdiU from Shewanella putrefaciens (strain CN-32 / ATCC BAA-453).